We begin with the raw amino-acid sequence, 247 residues long: uncharacterized protein (247 aa).

This is an uncharacterized protein from Rickettsia prowazekii (strain Madrid E).